Reading from the N-terminus, the 131-residue chain is Profilin-1 (131 aa).

The protein belongs to the profilin family. As to quaternary structure, occurs in many kinds of cells as a complex with monomeric actin in a 1:1 ratio.

Its subcellular location is the cytoplasm. The protein localises to the cytoskeleton. Binds to actin and affects the structure of the cytoskeleton. At high concentrations, profilin prevents the polymerization of actin, whereas it enhances it at low concentrations. By binding to PIP2, it inhibits the formation of IP3 and DG. The polypeptide is Profilin-1 (PRO1) (Hordeum vulgare (Barley)).